We begin with the raw amino-acid sequence, 840 residues long: SLIT and NTRK-like protein 6 (840 aa).

The N-terminal stretch at 1 to 18 (MKLWTYLLYPSLLACLSL) is a signal peptide. The LRRNT 1 domain maps to 22–67 (SPMPSVRGSCDTLCNCEEKDGIMIINCEEKGINKLSQISVPPSRPF). Residues 23–609 (PMPSVRGSCD…LTDAVPLSVL (587 aa)) are Extracellular-facing. LRR repeat units follow at residues 89 to 110 (NALS…AFNG), 113 to 134 (LLKQ…TFHG), 137 to 158 (NLEF…AFSK), 161 to 182 (RLKV…IFRF), and 184 to 205 (PLTH…GFLE). Residues 218-269 (NKWACNCELLQLKNWLENMPPQSIIGDVICYSPPPFKGSVLSRLKKESFCPT) enclose the LRRCT 1 domain. Positions 319–360 (PSTQLPVPYCPIPCNCKVLSPSGLLIHCQERNIESLSDLQPP) constitute an LRRNT 2 domain. LRR repeat units follow at residues 363-384 (NPRK…DLTD), 387-408 (TLEM…SFMN), 411-432 (RLQK…MFLG), 435-456 (SLEY…TFNP), 459-480 (KLKV…IFLG), and 482-503 (PLTR…NILD). The region spanning 516–567 (NPWDCSCDLVGLQQWIHKLGKGTMTDDILCTSPGHLDKKELKALNSDLLCPG) is the LRRCT 2 domain. Residues 610–630 (ILGLLIVFITIVFCAAGIVVF) form a helical membrane-spanning segment. At 631 to 840 (VLHRRRRYKK…DYLEVLEQQT (210 aa)) the chain is on the cytoplasmic side. Positions 717–726 (QRSLLERENH) are enriched in basic and acidic residues. The disordered stretch occupies residues 717–736 (QRSLLERENHSPLTGSNMKY). A compositionally biased stretch (polar residues) spans 727–736 (SPLTGSNMKY).

It belongs to the SLITRK family. In terms of tissue distribution, in the embryo, expressed in otic cyst, lateral trunk epidermis and underlying mesodermal tissue, limb bud, maxillary process, cochlea, retina, tongue, tooth primordium, central nervous system, and primordia of visceral organs including lung, gastrointestinal tract and pancreas. In the central nervous system, expressed primarily in dorsal thalamus, cerebellum and medulla.

It is found in the cell membrane. Its function is as follows. Regulator of neurite outgrowth required for normal hearing and vision. The polypeptide is SLIT and NTRK-like protein 6 (Slitrk6) (Mus musculus (Mouse)).